We begin with the raw amino-acid sequence, 183 residues long: MDSEFFQPVYPRHYGECLSPTSTPSFFSTHMYTILIAIVVLVIIIIVLIYLFSSRKKKAAAAIEEEDIQFINPYQDQQWAEVTPQPGTSKPAGATTASAGKPVTGRPATNRPATNKPVTDNPVTDRLVMATGGPAAAPAAASAHPTEPYTTVTTQNTASQTMSAIENLRQRNTYTHKDLENSL.

A helical membrane pass occupies residues 32–52 (YTILIAIVVLVIIIIVLIYLF). Positions 81–157 (EVTPQPGTSK…PYTTVTTQNT (77 aa)) are disordered. Residues 111 to 122 (RPATNKPVTDNP) show a composition bias toward polar residues. The segment covering 130–143 (ATGGPAAAPAAASA) has biased composition (low complexity). The tract at residues 149–161 (YTTVTTQNTASQT) is interaction with host DYNLL1.

This sequence belongs to the asfivirus envelope protein p54 family. In terms of assembly, interacts with the host light chain cytoplasmic dynein DYNLL1; this interaction is critical for intracellular microtubule-dependent virus transport toward viral factories.

Its subcellular location is the virion membrane. The protein localises to the host cytoplasm. It localises to the host cytoskeleton. The protein resides in the host endoplasmic reticulum membrane. Inner envelope protein involved, through its interaction with host dynein, in the intracellular microtubule-dependent transport of viral capsid toward viral factories. Seems to induce caspase-3 activation and apoptosis. Plays a role in virion morphogenesis by recruiting and transforming the host ER membranes into the precursors of the viral envelope. Involved in virus attachment to the host cell. In Ornithodoros (relapsing fever ticks), this protein is Inner membrane protein p54.